The sequence spans 832 residues: Putative pentatricopeptide repeat-containing protein At5g08310, mitochondrial (832 aa).

The N-terminal 27 residues, 1 to 27 (MAFSRIALLCQRFSRQQQQRQLLHRPL), are a transit peptide targeting the mitochondrion. PPR repeat units follow at residues 105-139 (DMYA…RCFM), 140-174 (SPGA…GLCV), 176-212 (NAYT…GFHF), 213-247 (DKFT…GWLD), 252-281 (TILV…DIRL), 282-316 (NYKT…GMNA), 317-351 (DIAL…GIPP), 352-383 (DRGI…IDKK), 385-415 (VMLL…LMGN), 438-472 (DSDS…GLIP), 473-507 (GPMM…GVEP), 508-542 (SQFT…GFEP), 543-577 (WIKH…GFLG), 578-612 (HMVA…GHCP), 613-647 (DVIA…GLKP), 648-682 (TVAT…EKNP), 683-717 (DVIT…DCYP), 718-752 (NRIT…EMEP), and 753-787 (DSAV…GRFP).

Belongs to the PPR family. P subfamily.

It is found in the mitochondrion. The sequence is that of Putative pentatricopeptide repeat-containing protein At5g08310, mitochondrial from Arabidopsis thaliana (Mouse-ear cress).